The primary structure comprises 372 residues: Invasion protein InvE (372 aa).

The segment covering 1–19 (MIPGSTSGISFSRILSRQT) has biased composition (polar residues). The disordered stretch occupies residues 1–46 (MIPGSTSGISFSRILSRQTSHQDATQHTDAQQAEIQQAAEDSSPGA). Positions 21–40 (HQDATQHTDAQQAEIQQAAE) are enriched in low complexity.

It localises to the cell membrane. Functionally, involved in the triggering of intracellular events that lead to microbial internalization. These events include increase in calcium level, redistribution of actin microfilaments, and changes in the normal structure of the microvilli. Encoded within the type III secretion system (SPI-1 T3SS), it is essential for the translocation of protein effectors into host cells. Forms a complex with SipB and SipC in the presence of their chaperone SicA. Positively regulates the secretion of SPI-1 T3SS effector proteins SipB, SipC and SipD and negatively influences the secretion of SipA, SopA and SptP. This chain is Invasion protein InvE (invE), found in Salmonella typhimurium (strain LT2 / SGSC1412 / ATCC 700720).